We begin with the raw amino-acid sequence, 528 residues long: Xylose import ATP-binding protein XylG (528 aa).

2 consecutive ABC transporter domains span residues leucine 6–glutamate 245 and phenylalanine 262–proline 507. Glycine 38–serine 45 is a binding site for ATP. Positions leucine 504–threonine 528 are disordered.

This sequence belongs to the ABC transporter superfamily. Xylose importer (TC 3.A.1.2.4) family. As to quaternary structure, the complex is composed of two ATP-binding proteins (XylG), two transmembrane proteins (XylH) and a solute-binding protein (XylF).

The protein resides in the cell inner membrane. It carries out the reaction D-xylose(out) + ATP + H2O = D-xylose(in) + ADP + phosphate + H(+). Functionally, part of the ABC transporter complex XylFGH involved in xylose import. Responsible for energy coupling to the transport system. In Pseudomonas syringae pv. tomato (strain ATCC BAA-871 / DC3000), this protein is Xylose import ATP-binding protein XylG.